A 69-amino-acid polypeptide reads, in one-letter code: Amphipathic peptide CT2 (69 aa).

The signal sequence occupies residues M1 to A23. The residue at position 36 (F36) is a Phenylalanine amide. Residues G40 to R69 constitute a propeptide that is removed on maturation.

It belongs to the non-disulfide-bridged peptide (NDBP) superfamily. Short antimicrobial peptide (group 4) family. As to expression, expressed by the venom gland.

It is found in the secreted. The protein resides in the target cell membrane. In terms of biological role, amphipathic peptide that shows antibacterial activities against both Gram-positive (MIC=10 uM, 20 uM and 20 uM against S.aureus, B.subtilis and S.agalactiae, respectively) and Gram-negative bacteria (MIC=20 uM, 10 uM, and 10 uM against E.coli, S.typhi, and P.aeruginosa, respectively). Is mildly hemolytic at its MIC range, but shows a strong cytotoxic activity at higher concentrations, reaching 84% lysis at 50 uM. This is Amphipathic peptide CT2 from Vaejovis mexicanus smithi (Mexican scorpion).